The chain runs to 286 residues: Hypersensitive-induced response protein 1 (286 aa).

Gly-2 carries N-myristoyl glycine lipidation. Residues 114–190 adopt a coiled-coil conformation; sequence LDDVFEQKND…EKILQIKRAE (77 aa).

In terms of assembly, self-interacts and forms heteromers. Interacts with NB-LRR class of R proteins before R proteins (e.g. RPS2 or RPM1) are activated by the effectors. Interacts with LRR1.

The protein localises to the cell membrane. Its function is as follows. Positive regulator of hypersensitive response (HR)-like cell death. May be involved in potassium ion channel regulation. The protein is Hypersensitive-induced response protein 1 of Arabidopsis thaliana (Mouse-ear cress).